We begin with the raw amino-acid sequence, 338 residues long: UDP-glucose 4-epimerase (338 aa).

Residues 11–12, 31–36, 58–59, 80–84, Asn-99, Ser-124, Tyr-149, Lys-153, and Phe-178 contribute to the NAD(+) site; these read YI, DNLCNS, DI, and FAGLK. Substrate is bound by residues Ser-124 and Tyr-149. The active-site Proton acceptor is Tyr-149. Residues Asn-179, 199–200, 216–218, Arg-231, and 292–295 contribute to the substrate site; these read NL, SVF, and RSGD.

Belongs to the NAD(P)-dependent epimerase/dehydratase family. In terms of assembly, homodimer. Requires NAD(+) as cofactor.

The enzyme catalyses UDP-alpha-D-glucose = UDP-alpha-D-galactose. It functions in the pathway carbohydrate metabolism; galactose metabolism. Its function is as follows. Involved in the metabolism of galactose. Catalyzes the conversion of UDP-galactose (UDP-Gal) to UDP-glucose (UDP-Glc) through a mechanism involving the transient reduction of NAD. By controlling the internal galactose concentration, it may be linked to the biosynthesis of lipopolysaccharide surface molecules, which are important for the pathogenesis of H.influenzae. In Haemophilus influenzae (strain ATCC 51907 / DSM 11121 / KW20 / Rd), this protein is UDP-glucose 4-epimerase (galE).